Consider the following 431-residue polypeptide: Homeobox protein knotted-1-like 3 (431 aa).

A disordered region spans residues 15–47 (NHFTDQHQPPPPQPPPPPPQQQQHFQEAPPPNW). Over residues 22-34 (QPPPPQPPPPPPQ) the composition is skewed to pro residues. Residues 322–342 (ELKHELKQGYKEKIVDIREEI) form the ELK domain. Positions 343–406 (LRKRRAGKLP…NQRKRNWHSN (64 aa)) form a DNA-binding region, homeobox; TALE-type. The disordered stretch occupies residues 402-431 (NWHSNPSSSTVLKNKRKSNAGDNSGRERFA). The segment covering 404-413 (HSNPSSSTVL) has biased composition (polar residues).

This sequence belongs to the TALE/KNOX homeobox family. As to quaternary structure, may form heterodimeric complex with the TALE/BELL proteins. Interacts with OFP1, OFP2, OFP4, OFP12 and OFP14. Interacts with KNATM-B.

Its subcellular location is the nucleus. This is Homeobox protein knotted-1-like 3 (KNAT3) from Arabidopsis thaliana (Mouse-ear cress).